The chain runs to 261 residues: MRYLKKVTIYISLLILTIFIGGCGFINKEDSKETEIKQNFNKMLNVYPTKNLEDFYDKEGFRDEEFDKGDKGTWIIRSEMTKQPKGKIMTSRGMVLYINRNTRTAKGYFLIDEIKDDNSGRPIENEKKYPVKMNHNKIFPTKPISDDKLKKEIENFKFFVQYGDFKNLKDYKDGEISYNPNVPSYSAQYQLNNNDNNVKQLRKRYDIPTNQAPKLLLKGDGDLKGSSVGSKNLEFTFVENKEENIFFTDAVQFTPSEDDES.

The N-terminal stretch at 1 to 22 is a signal peptide; sequence MRYLKKVTIYISLLILTIFIGG. Cys-23 is lipidated: N-palmitoyl cysteine. The S-diacylglycerol cysteine moiety is linked to residue Cys-23.

This sequence belongs to the staphylococcal tandem lipoprotein family.

It is found in the cell membrane. This is an uncharacterized protein from Staphylococcus epidermidis (strain ATCC 35984 / DSM 28319 / BCRC 17069 / CCUG 31568 / BM 3577 / RP62A).